We begin with the raw amino-acid sequence, 271 residues long: Mannosyl-3-phosphoglycerate phosphatase (271 aa).

Asp-13 (nucleophile) is an active-site residue. 3 residues coordinate Mg(2+): Asp-13, Asp-15, and Asp-214.

It belongs to the HAD-like hydrolase superfamily. MPGP family. Mg(2+) is required as a cofactor.

It localises to the cytoplasm. The catalysed reaction is 2-O-(alpha-D-mannosyl)-3-phosphoglycerate + H2O = (2R)-2-O-(alpha-D-mannosyl)-glycerate + phosphate. This Escherichia coli (strain 55989 / EAEC) protein is Mannosyl-3-phosphoglycerate phosphatase.